An 821-amino-acid polypeptide reads, in one-letter code: Lysosomal beta glucosidase (821 aa).

The N-terminal stretch at 1–24 (MKTIKSLFLLSLLIVNLLISSTYG) is a signal peptide. The propeptide occupies 25–69 (SSIRVSIVGGEEAEVIEKPRTFGNKRELKLEYSQIYPKKQLNQEN). N-linked (GlcNAc...) asparagine glycans are attached at residues asparagine 113, asparagine 146, and asparagine 266. The active site involves aspartate 363. Asparagine 535, asparagine 555, asparagine 703, and asparagine 721 each carry an N-linked (GlcNAc...) asparagine glycan.

It belongs to the glycosyl hydrolase 3 family. Post-translationally, glycosylated. The polyoligosaccharides are of the high-mannose type and are highly substituted with both phosphate and sulfate moieties.

Its subcellular location is the lysosome. It catalyses the reaction Hydrolysis of terminal, non-reducing beta-D-glucosyl residues with release of beta-D-glucose.. The sequence is that of Lysosomal beta glucosidase (gluA) from Dictyostelium discoideum (Social amoeba).